Consider the following 714-residue polypeptide: Methyl-accepting chemotaxis protein TlpQ (714 aa).

The helical transmembrane segment at 12–32 (ITLLAGLCLLGVVALLVGLSV) threads the bilayer. Positions 50–290 (LDESARLRLE…LLGKNLAKAD (241 aa)) constitute a Cache domain. Residues E170, 208–210 (YFD), and D239 contribute to the histamine site. The chain crosses the membrane as a helical span at residues 360 to 380 (TWVELGLGLGAAVLGLLVLWL). One can recognise an HAMP domain in the interval 383–437 (RGVTRPILGVAHMLRDIASGEGDLTQRLPHTGRDELGELAGWFNRFLDKLQPIIR). Positions 442-678 (SVRDARSTAD…EINRNVAAIR (237 aa)) constitute a Methyl-accepting transducer domain.

This sequence belongs to the methyl-accepting chemotaxis (MCP) protein family. Homotetramer.

It is found in the cell membrane. In terms of biological role, chemotactic-signal transducers respond to changes in the concentration of attractants and repellents in the environment, transduce a signal from the outside to the inside of the cell, and facilitate sensory adaptation through the variation of the level of methylation. TlpQ is a chemoreceptor that binds and mediates chemotaxis to histamine, a key biological signaling molecule. It binds histamine with high affinity, which permits responses to very low histamine concentrations. Chemotaxis to histamine may play a role in the virulence of P.aeruginosa by recruiting cells at the infection site and consequently modulating the expression of quorum-sensing-dependent virulence genes. TlpQ also binds and mediates chemotaxis to polyamines such as putrescine, spermidine, cadaverine, agmatine and ethylenediamine. In addition, binds the quorum-sensing signal autoinducer 2 (AI-2), thus inducing chemotaxis toward AI-2 and biofilm formation. The protein is Methyl-accepting chemotaxis protein TlpQ of Pseudomonas aeruginosa (strain ATCC 15692 / DSM 22644 / CIP 104116 / JCM 14847 / LMG 12228 / 1C / PRS 101 / PAO1).